A 243-amino-acid polypeptide reads, in one-letter code: 1-(5-phosphoribosyl)-5-[(5-phosphoribosylamino)methylideneamino] imidazole-4-carboxamide isomerase (243 aa).

Asp-8 functions as the Proton acceptor in the catalytic mechanism. The active-site Proton donor is the Asp-129.

It belongs to the HisA/HisF family.

It is found in the cytoplasm. It catalyses the reaction 1-(5-phospho-beta-D-ribosyl)-5-[(5-phospho-beta-D-ribosylamino)methylideneamino]imidazole-4-carboxamide = 5-[(5-phospho-1-deoxy-D-ribulos-1-ylimino)methylamino]-1-(5-phospho-beta-D-ribosyl)imidazole-4-carboxamide. The protein operates within amino-acid biosynthesis; L-histidine biosynthesis; L-histidine from 5-phospho-alpha-D-ribose 1-diphosphate: step 4/9. This Geobacter sp. (strain M21) protein is 1-(5-phosphoribosyl)-5-[(5-phosphoribosylamino)methylideneamino] imidazole-4-carboxamide isomerase.